Here is a 352-residue protein sequence, read N- to C-terminus: Keratocan (352 aa).

Positions 1–20 (MASTICFILWVVFVTDTVWT) are cleaved as a signal peptide. The region spanning 33–71 (EDWTMHDFDCPRECFCPPSFPTALYCENRGLKEIPAIPS) is the LRRNT domain. 2 disulfide bridges follow: Cys-42/Cys-48 and Cys-46/Cys-58. LRR repeat units lie at residues 72 to 93 (RIWY…PFEN), 96 to 117 (QLRW…KGAL), 122 to 142 (KLLF…PLPR), 143 to 164 (SLEQ…TFSN), 167 to 180 (NLTL…KLLD), 193 to 214 (NLMQ…LPAN), 215 to 235 (TMQV…YFNV), and 238 to 258 (KVAF…PSSG). The N-linked (GlcNAc...) (keratan sulfate) asparagine glycan is linked to Asn-93. Asn-167 carries an N-linked (GlcNAc...) (keratan sulfate) asparagine glycan. Asn-222 carries N-linked (GlcNAc...) asparagine glycosylation. N-linked (GlcNAc...) (keratan sulfate) asparagine glycosylation occurs at Asn-260. 2 LRR repeats span residues 263–282 (SILD…KISA) and 283–304 (HLQH…VICP). The N-linked (GlcNAc...) asparagine glycan is linked to Asn-298. A disulfide bridge links Cys-303 with Cys-343.

Belongs to the small leucine-rich proteoglycan (SLRP) family. SLRP class II subfamily. Post-translationally, binds three long, highly sulfated keratan sulfate chains in the cornea but short, non-sulfated poly(N-acetyllactosamine) chains in other tissues. The N-terminus is blocked. As to expression, abundant in cornea and sclera but also found in other tissues.

Its subcellular location is the secreted. It localises to the extracellular space. It is found in the extracellular matrix. Functionally, may be important in developing and maintaining corneal transparency and for the structure of the stromal matrix. The protein is Keratocan (KERA) of Bos taurus (Bovine).